The following is a 197-amino-acid chain: Holliday junction branch migration complex subunit RuvA (197 aa).

The domain I stretch occupies residues Met-1 to Ala-64. Positions Ser-65–Gly-143 are domain II. The interval Gly-143–Ala-147 is flexible linker. Residues Ala-148–Val-197 are domain III.

It belongs to the RuvA family. Homotetramer. Forms an RuvA(8)-RuvB(12)-Holliday junction (HJ) complex. HJ DNA is sandwiched between 2 RuvA tetramers; dsDNA enters through RuvA and exits via RuvB. An RuvB hexamer assembles on each DNA strand where it exits the tetramer. Each RuvB hexamer is contacted by two RuvA subunits (via domain III) on 2 adjacent RuvB subunits; this complex drives branch migration. In the full resolvosome a probable DNA-RuvA(4)-RuvB(12)-RuvC(2) complex forms which resolves the HJ.

The protein resides in the cytoplasm. Functionally, the RuvA-RuvB-RuvC complex processes Holliday junction (HJ) DNA during genetic recombination and DNA repair, while the RuvA-RuvB complex plays an important role in the rescue of blocked DNA replication forks via replication fork reversal (RFR). RuvA specifically binds to HJ cruciform DNA, conferring on it an open structure. The RuvB hexamer acts as an ATP-dependent pump, pulling dsDNA into and through the RuvAB complex. HJ branch migration allows RuvC to scan DNA until it finds its consensus sequence, where it cleaves and resolves the cruciform DNA. This Chromobacterium violaceum (strain ATCC 12472 / DSM 30191 / JCM 1249 / CCUG 213 / NBRC 12614 / NCIMB 9131 / NCTC 9757 / MK) protein is Holliday junction branch migration complex subunit RuvA.